A 40-amino-acid chain; its full sequence is Ice-structuring protein GS-8 (40 aa).

Met1 carries the blocked amino end (Met) modification.

Belongs to the type-I AFP family.

Its function is as follows. Antifreeze proteins lower the blood freezing point. The chain is Ice-structuring protein GS-8 from Myoxocephalus aenaeus (Grubby sculpin).